The primary structure comprises 1359 residues: DNA-directed RNA polymerase subunit beta (1359 aa).

It belongs to the RNA polymerase beta chain family. In terms of assembly, the RNAP catalytic core consists of 2 alpha, 1 beta, 1 beta' and 1 omega subunit. When a sigma factor is associated with the core the holoenzyme is formed, which can initiate transcription.

It catalyses the reaction RNA(n) + a ribonucleoside 5'-triphosphate = RNA(n+1) + diphosphate. Functionally, DNA-dependent RNA polymerase catalyzes the transcription of DNA into RNA using the four ribonucleoside triphosphates as substrates. The polypeptide is DNA-directed RNA polymerase subunit beta (Nitrosococcus oceani (strain ATCC 19707 / BCRC 17464 / JCM 30415 / NCIMB 11848 / C-107)).